A 151-amino-acid polypeptide reads, in one-letter code: Small ribosomal subunit protein uS9 (151 aa).

The segment covering 1–19 (MTETTPAPQTPAAPAGPAQ) has biased composition (low complexity). Disordered regions lie at residues 1-20 (MTET…PAQS) and 121-151 (KAGF…YSKR). Residues 127–136 (RDPRATERKK) show a composition bias toward basic and acidic residues. Positions 137 to 151 (YGLKKARKAPQYSKR) are enriched in basic residues.

Belongs to the universal ribosomal protein uS9 family.

The sequence is that of Small ribosomal subunit protein uS9 (rpsI) from Mycobacterium bovis (strain ATCC BAA-935 / AF2122/97).